The sequence spans 467 residues: Ran-binding protein M homolog (467 aa).

The disordered stretch occupies residues 1–25 (MNSSPPPANSANGDTTNNGENGQDL). Over residues 9 to 25 (NSANGDTTNNGENGQDL) the composition is skewed to polar residues. Positions 31 to 219 (DKIRLSAKRD…VLVNFGKKKF (189 aa)) constitute a B30.2/SPRY domain. In terms of domain architecture, LisH spans 244-276 (PPNIGYGLVKTYLLHYGYEETLDAFNLATKNTV). Positions 295–353 (ALKQRKNLRQLVRNGEIDTALAELQKLYPQIVQDDKSVVCFLLHCQKFIELVRVGKLEE) constitute a CTLH domain.

The protein belongs to the RANBP9/10 family. In terms of assembly, interacts with WDR36, WDS, GID8, MAEA and RMD5.

It localises to the cytoplasm. Its subcellular location is the nucleus. The protein localises to the perinuclear region. The sequence is that of Ran-binding protein M homolog from Arabidopsis thaliana (Mouse-ear cress).